Reading from the N-terminus, the 535-residue chain is BAR/IMD domain-containing adapter protein 2 (535 aa).

Residues 1-250 enclose the IMD domain; it reads MSLSRSEEMH…VQLMQQMANS (250 aa). Residues 88 to 153 are a coiled coil; the sequence is NQLEETLKSF…LRKKSQGSKN (66 aa). Ser262, Ser324, Ser326, and Ser337 each carry phosphoserine. A disordered region spans residues 299–370; that stretch reads VMNGVAGPDS…TLPRSSSMAA (72 aa). Positions 321-335 are enriched in low complexity; it reads QPKSLSPPQSQSKLS. Thr341 bears the Phosphothreonine mark. At Ser347 the chain carries Phosphoserine. Positions 349–368 are enriched in polar residues; that stretch reads TPKNSYATTENKTLPRSSSM. Thr361 is modified (phosphothreonine). Phosphoserine is present on residues Ser367, Ser385, Ser396, and Ser455. Residues 375 to 438 enclose the SH3 domain; it reads NGRMRVKAIF…PFSYTRVLDS (64 aa). The tract at residues 445–477 is disordered; sequence HMSLQQGKSSSTGNLLDKDDLALPPPDYGTSSR. Polar residues predominate over residues 447-458; the sequence is SLQQGKSSSTGN.

Homodimer. Interacts with CDC42 and RAC1 that have been activated by GTP binding. Binds DIAPH1. Interacts with ATN1, ADGRB1, SHANK1, SHANK2, SHANK3, TIAM1, WASF1 and WASF2. Interacts with ENAH after recruitment of CDC42. Interacts with EPS8. In terms of processing, phosphorylated on tyrosine residues by INSR in response to insulin treatment. Detected in liver, brain, olfactory bulb, brain cortex, caudate putamen, hypothalamus and cerebellum.

The protein localises to the cytoplasm. Its subcellular location is the membrane. It is found in the cell projection. The protein resides in the filopodium. It localises to the ruffle. The protein localises to the cytoskeleton. Adapter protein that links membrane-bound small G-proteins to cytoplasmic effector proteins. Necessary for CDC42-mediated reorganization of the actin cytoskeleton and for RAC1-mediated membrane ruffling. Involved in the regulation of the actin cytoskeleton by WASF family members and the Arp2/3 complex. Plays a role in neurite growth. Acts syngeristically with ENAH to promote filipodia formation. Plays a role in the reorganization of the actin cytoskeleton in response to bacterial infection. Participates in actin bundling when associated with EPS8, promoting filopodial protrusions. In Mus musculus (Mouse), this protein is BAR/IMD domain-containing adapter protein 2 (Baiap2).